The primary structure comprises 420 residues: Histidine--tRNA ligase (420 aa).

The protein belongs to the class-II aminoacyl-tRNA synthetase family. In terms of assembly, homodimer.

Its subcellular location is the cytoplasm. The catalysed reaction is tRNA(His) + L-histidine + ATP = L-histidyl-tRNA(His) + AMP + diphosphate + H(+). The sequence is that of Histidine--tRNA ligase from Thermotoga petrophila (strain ATCC BAA-488 / DSM 13995 / JCM 10881 / RKU-1).